Reading from the N-terminus, the 260-residue chain is Proteasome subunit alpha (260 aa).

Residues 241–260 form a disordered region; the sequence is VEEEEVKEKEEDYSELDSHY.

Belongs to the peptidase T1A family. As to quaternary structure, the 20S proteasome core is composed of 14 alpha and 14 beta subunits that assemble into four stacked heptameric rings, resulting in a barrel-shaped structure. The two inner rings, each composed of seven catalytic beta subunits, are sandwiched by two outer rings, each composed of seven alpha subunits. The catalytic chamber with the active sites is on the inside of the barrel. Has a gated structure, the ends of the cylinder being occluded by the N-termini of the alpha-subunits. Is capped at one or both ends by the proteasome regulatory ATPase, PAN.

Its subcellular location is the cytoplasm. Its activity is regulated as follows. The formation of the proteasomal ATPase PAN-20S proteasome complex, via the docking of the C-termini of PAN into the intersubunit pockets in the alpha-rings, triggers opening of the gate for substrate entry. Interconversion between the open-gate and close-gate conformations leads to a dynamic regulation of the 20S proteasome proteolysis activity. Functionally, component of the proteasome core, a large protease complex with broad specificity involved in protein degradation. The protein is Proteasome subunit alpha of Pyrococcus horikoshii (strain ATCC 700860 / DSM 12428 / JCM 9974 / NBRC 100139 / OT-3).